The chain runs to 142 residues: Large ribosomal subunit protein uL13 (142 aa).

It belongs to the universal ribosomal protein uL13 family. Part of the 50S ribosomal subunit.

Functionally, this protein is one of the early assembly proteins of the 50S ribosomal subunit, although it is not seen to bind rRNA by itself. It is important during the early stages of 50S assembly. The sequence is that of Large ribosomal subunit protein uL13 from Acidithiobacillus ferrooxidans (strain ATCC 23270 / DSM 14882 / CIP 104768 / NCIMB 8455) (Ferrobacillus ferrooxidans (strain ATCC 23270)).